The chain runs to 429 residues: Adenylosuccinate synthetase (429 aa).

GTP is bound by residues 12-18 (GDEGKGK) and 40-42 (GHT). Aspartate 13 serves as the catalytic Proton acceptor. Residues aspartate 13 and glycine 40 each contribute to the Mg(2+) site. IMP is bound by residues 13–16 (DEGK), 38–41 (NAGH), threonine 128, arginine 142, glutamine 223, threonine 238, and arginine 302. Histidine 41 (proton donor) is an active-site residue. 298–304 (TTTGRPR) contributes to the substrate binding site. Residues arginine 304, 330–332 (SID), and 412–414 (SVG) contribute to the GTP site.

Belongs to the adenylosuccinate synthetase family. In terms of assembly, homodimer. Mg(2+) is required as a cofactor.

It is found in the cytoplasm. The enzyme catalyses IMP + L-aspartate + GTP = N(6)-(1,2-dicarboxyethyl)-AMP + GDP + phosphate + 2 H(+). The protein operates within purine metabolism; AMP biosynthesis via de novo pathway; AMP from IMP: step 1/2. Its function is as follows. Plays an important role in the de novo pathway of purine nucleotide biosynthesis. Catalyzes the first committed step in the biosynthesis of AMP from IMP. The polypeptide is Adenylosuccinate synthetase (Exiguobacterium sp. (strain ATCC BAA-1283 / AT1b)).